Here is a 181-residue protein sequence, read N- to C-terminus: Endoglucanase (181 aa).

An intrachain disulfide couples C4 to C16. D24 functions as the Nucleophile in the catalytic mechanism. Disulfide bonds link C30–C69, C32–C176, C65–C178, C72–C157, and C103–C113. The Proton donor role is filled by D132.

Digestive gland.

The catalysed reaction is Endohydrolysis of (1-&gt;4)-beta-D-glucosidic linkages in cellulose, lichenin and cereal beta-D-glucans.. Active towards the soluble carboxymethylcellulose (CMC). Possesses expansin activity too. The chain is Endoglucanase from Mytilus edulis (Blue mussel).